We begin with the raw amino-acid sequence, 842 residues long: MPLSYQHFRRLLLLDEEAGPLEEELPRLADEDLNRRVAEDLHLQLPNVSIPWTHKVGNFTGLYSSTIPVFNPDWQTPSFPNIHLHQDIITKCEQFVGPLTVNEKRRLKLVMPARFFPNSTKYLPLDKGIKPYYPENVVNHYFQTRHYLHTLWKAGILYKRETSRSASFCGSPYTWEQDLQHGAFLDGPSRVGKEPFHQQSSRIPSRSPVGPSIQSKYQQSRLGLQSQKGPLARGQQGRSWSLWTRVHPSTRRPFGVEPSVSGHTNNFASRSASCLHQSSVREAAYSHLSTTKRQSSSGHAVELYSIPPSSTKSQSQGPVFSCWWLQFRDSEPCSDYCLSHLVNLLQDWGPCTEHGEYHIRIPRTPARVTGGVFLVDKNPHNTAESRLVVDFSQFSRGSARVSWPKFAVPNLQSLTNLLSSNLSWLSLDVSAAFYHIPLHPAAMPHLLVGSSGLSRYVARLSSDSRILDHQYGTLQNLHDSCSRQLYVSLMLLYKTFGRKLHLYSHPIILGFRKIPMGVGLSPFLLAQFTSAICSVVRRAFPHCLAFSYMDDVVLGAKSVQHLESLYTAVTNFLLSLGIHLNPNKTKRWGYSLNFMGYVIGSWGTLPQEHITQKIKQCFRKLPVNRPIDWKVCQRITGLLGFAAPFTQCGYPALMPLYACIQAKQAFTFSPTYKAFLCKQYMNLYPVARQRPGLCQVFADATPTGWGLAIGHQRMRGTFVAPLPIHTAELLAACFARSRSGAKLIGTDNSVVLSRKYTSFPWLLGCAANWILRGTSFVYVPSALNPADDPSRGRLGLCRPLLRLPFLPTTGRTSLYAVSPSVPSHLPDRVHFASPLHVTWKPP.

The terminal protein domain (TP) stretch occupies residues 1-177 (MPLSYQHFRR…FCGSPYTWEQ (177 aa)). The tract at residues 178–345 (DLQHGAFLDG…YCLSHLVNLL (168 aa)) is spacer. The disordered stretch occupies residues 184–238 (FLDGPSRVGKEPFHQQSSRIPSRSPVGPSIQSKYQQSRLGLQSQKGPLARGQQGR). Residues 212 to 228 (SIQSKYQQSRLGLQSQK) show a composition bias toward polar residues. Residues 346-689 (QDWGPCTEHG…YMNLYPVARQ (344 aa)) form a polymerase/reverse transcriptase domain (RT) region. A Reverse transcriptase domain is found at 356–599 (EYHIRIPRTP…YSLNFMGYVI (244 aa)). The Mg(2+) site is built by Asp-428, Asp-550, and Asp-551.

The protein belongs to the hepadnaviridae P protein family.

The catalysed reaction is DNA(n) + a 2'-deoxyribonucleoside 5'-triphosphate = DNA(n+1) + diphosphate. It catalyses the reaction Endonucleolytic cleavage to 5'-phosphomonoester.. Its activity is regulated as follows. Activated by host HSP70 and HSP40 in vitro to be able to bind the epsilon loop of the pgRNA. Because deletion of the RNase H region renders the protein partly chaperone-independent, the chaperones may be needed indirectly to relieve occlusion of the RNA-binding site by this domain. Inhibited by several reverse-transcriptase inhibitors: Lamivudine, Adefovir and Entecavir. Multifunctional enzyme that converts the viral RNA genome into dsDNA in viral cytoplasmic capsids. This enzyme displays a DNA polymerase activity that can copy either DNA or RNA templates, and a ribonuclease H (RNase H) activity that cleaves the RNA strand of RNA-DNA heteroduplexes in a partially processive 3'- to 5'-endonucleasic mode. Neo-synthesized pregenomic RNA (pgRNA) are encapsidated together with the P protein, and reverse-transcribed inside the nucleocapsid. Initiation of reverse-transcription occurs first by binding the epsilon loop on the pgRNA genome, and is initiated by protein priming, thereby the 5'-end of (-)DNA is covalently linked to P protein. Partial (+)DNA is synthesized from the (-)DNA template and generates the relaxed circular DNA (RC-DNA) genome. After budding and infection, the RC-DNA migrates in the nucleus, and is converted into a plasmid-like covalently closed circular DNA (cccDNA). The activity of P protein does not seem to be necessary for cccDNA generation, and is presumably released from (+)DNA by host nuclear DNA repair machinery. The sequence is that of Protein P from Hepatitis B virus genotype G (isolate United States/USG17/2002) (HBV-G).